We begin with the raw amino-acid sequence, 1698 residues long: Cullin-7 (1698 aa).

A disordered region spans residues 315-357 (QASDRPRSSARSPGSIFQPQLADVSPGLPAAQAQPSFRRSRRF). Residue S339 is modified to Phosphoserine. Positions 360–433 (RSEFASGNTY…HWHMLEILGF (74 aa)) constitute a CPH domain. Over residues 601 to 611 (SEDAAKVEAKE) the composition is skewed to basic and acidic residues. Residues 601–623 (SEDAAKVEAKEPPSQSPNTPLQR) are disordered. The 180-residue stretch at 814-993 (PINIPFFDVF…HTRLFYMVRA (180 aa)) folds into the DOC domain. The interval 1345–1370 (GASGKEHKSEKEEEAGAAAVVDVAEG) is disordered. K1576 is covalently cross-linked (Glycyl lysine isopeptide (Lys-Gly) (interchain with G-Cter in NEDD8)).

Belongs to the cullin family. As to quaternary structure, component of the 3M complex, composed of core components CUL7, CCDC8 and OBSL1. Component of the Cul7-RING(FBXW8) complex consisting of CUL7, RBX1, SKP1 and FBXW8. Within the Cul7-RING(FBXW8) complex interacts with FBXW8 and RBX1, but not with SKP1. Interacts with CUL1 (via the C-terminal domain); the interaction seems to be mediated by FBXW8; it is likely specific to FBXW8, but not other F-box proteins. Interacts (via the CPH domain) with p53/TP53; the interaction preferentially involves tetrameric and dimeric p53/TP53; this interaction recruits p53/TP53 for ubiquitination by neddylated CUL1-RBX1. The CUL7-CUL9 heterodimer seems to interact specifically with p53/TP53. Interacts with FBXW8; interaction is mutually exclusive of binding to CUL9 or p53/TP53. Interacts with CUL9; leading to inhibited CUL9 activity. Interacts with OBSL1. Interacts (as part of the 3M complex) with HDAC4 and HDAC5; it is negatively regulated by ANKRA2. In terms of assembly, (Microbial infection) Interacts with SV40 Large T antigen; this interaction seems to inhibit CUL7. Post-translationally, according to a report, may not be neddylated despite the conserved consensus site for neddylation at Lys-1576. Structural study of the Cul7-RING(FBXW8) reveals that both CUL7 and RBX1 are in orientations that are incompatible with neddylation. In terms of tissue distribution, highly expressed in fetal kidney and adult skeletal muscle. Also abundant in fetal brain, as well as in adult pancreas, kidney, placenta and heart. Detected in trophoblasts, lymphoblasts, osteoblasts, chondrocytes and skin fibroblasts.

Its subcellular location is the cytoplasm. The protein resides in the cytoskeleton. It localises to the microtubule organizing center. It is found in the centrosome. The protein localises to the perinuclear region. Its subcellular location is the golgi apparatus. The protein operates within protein modification; protein ubiquitination. In terms of biological role, core component of the 3M and Cul7-RING(FBXW8) complexes, which mediate the ubiquitination and subsequent proteasomal degradation of target proteins. Core component of the 3M complex, a complex required to regulate microtubule dynamics and genome integrity. It is unclear how the 3M complex regulates microtubules, it could act by controlling the level of a microtubule stabilizer. The Cul7-RING(FBXW8) complex alone lacks ubiquitination activity and does not promote polyubiquitination and proteasomal degradation of p53/TP53. However it mediates recruitment of p53/TP53 for ubiquitination by neddylated CUL1-RBX1. Interaction with CUL9 is required to inhibit CUL9 activity and ubiquitination of BIRC5. The Cul7-RING(FBXW8) complex also mediates ubiquitination and consequent degradation of target proteins such as GORASP1, IRS1 and MAP4K1/HPK1. Ubiquitination of GORASP1 regulates Golgi morphogenesis and dendrite patterning in brain. Mediates ubiquitination and degradation of IRS1 in a mTOR-dependent manner: the Cul7-RING(FBXW8) complex recognizes and binds IRS1 previously phosphorylated by S6 kinase (RPS6KB1 or RPS6KB2). The Cul7-RING(FBXW8) complex also mediates ubiquitination of MAP4K1/HPK1: recognizes and binds autophosphorylated MAP4K1/HPK1, leading to its degradation, thereby affecting cell proliferation and differentiation. Acts as a regulator in trophoblast cell epithelial-mesenchymal transition and placental development. While the Cul7-RING(FBXW8) and the 3M complexes are associated and involved in common processes, CUL7 and the Cul7-RING(FBXW8) complex may have additional functions. Probably plays a role in the degradation of proteins involved in endothelial proliferation and/or differentiation. The protein is Cullin-7 (CUL7) of Homo sapiens (Human).